A 293-amino-acid polypeptide reads, in one-letter code: NAD kinase (293 aa).

The active-site Proton acceptor is Asp-72. Residues 72–73 (DG), 146–147 (ND), Arg-157, Arg-174, Asp-176, 187–192 (TAYALS), and Gln-247 each bind NAD(+).

Belongs to the NAD kinase family. A divalent metal cation serves as cofactor.

It is found in the cytoplasm. The catalysed reaction is NAD(+) + ATP = ADP + NADP(+) + H(+). Involved in the regulation of the intracellular balance of NAD and NADP, and is a key enzyme in the biosynthesis of NADP. Catalyzes specifically the phosphorylation on 2'-hydroxyl of the adenosine moiety of NAD to yield NADP. This chain is NAD kinase, found in Teredinibacter turnerae (strain ATCC 39867 / T7901).